We begin with the raw amino-acid sequence, 386 residues long: MKNITILGSTGSIGVSTLEVVSAHPDRFRVVALTAGNNLEMLRQQIETFRPQMVSVLSEKLAVELDRSLPGYKPEIHYGVEGLIAAATAGDAHMVVAAIVGAAGLVPTAAAIRAGKDVALANKETLVTAGRLIMDLVRDKNVRLYPVDSEHSAVFQSMEGQSRKDVLRIILTASGGPFLNLPLDQLSRVSIDDALNHPNWSMGRKITIDSATMMNKGLEVIEARWLFDTPAERIDVNIHPQSIIHSMVEYVDGSVMAQLGVPDMKAPIAYALTYPERVPTGVNPLDLTALSGLTFFKPDYRRFPALKLAYDALAAGESMPAVMNAANEVAVEAFLSGVIGFIDIAATIARIMDAHEAHTLSTIEEALITDRWAREKARELVGLVRR.

Thr-10, Gly-11, Ser-12, Ile-13, Gly-36, Asn-38, and Asn-122 together coordinate NADPH. A 1-deoxy-D-xylulose 5-phosphate-binding site is contributed by Lys-123. Residue Glu-124 coordinates NADPH. Asp-148 serves as a coordination point for Mn(2+). 4 residues coordinate 1-deoxy-D-xylulose 5-phosphate: Ser-149, Glu-150, Ser-174, and His-197. A Mn(2+)-binding site is contributed by Glu-150. Position 203 (Gly-203) interacts with NADPH. Ser-210, Asn-215, Lys-216, and Glu-219 together coordinate 1-deoxy-D-xylulose 5-phosphate. Glu-219 contributes to the Mn(2+) binding site.

Belongs to the DXR family. It depends on Mg(2+) as a cofactor. Requires Mn(2+) as cofactor.

It catalyses the reaction 2-C-methyl-D-erythritol 4-phosphate + NADP(+) = 1-deoxy-D-xylulose 5-phosphate + NADPH + H(+). It functions in the pathway isoprenoid biosynthesis; isopentenyl diphosphate biosynthesis via DXP pathway; isopentenyl diphosphate from 1-deoxy-D-xylulose 5-phosphate: step 1/6. In terms of biological role, catalyzes the NADPH-dependent rearrangement and reduction of 1-deoxy-D-xylulose-5-phosphate (DXP) to 2-C-methyl-D-erythritol 4-phosphate (MEP). The polypeptide is 1-deoxy-D-xylulose 5-phosphate reductoisomerase (Geobacter sulfurreducens (strain ATCC 51573 / DSM 12127 / PCA)).